The sequence spans 126 residues: Holo-[acyl-carrier-protein] synthase (126 aa).

D8 and E59 together coordinate Mg(2+).

This sequence belongs to the P-Pant transferase superfamily. AcpS family. Requires Mg(2+) as cofactor.

The protein resides in the cytoplasm. The enzyme catalyses apo-[ACP] + CoA = holo-[ACP] + adenosine 3',5'-bisphosphate + H(+). Functionally, transfers the 4'-phosphopantetheine moiety from coenzyme A to a Ser of acyl-carrier-protein. In Rickettsia prowazekii (strain Madrid E), this protein is Holo-[acyl-carrier-protein] synthase.